The sequence spans 347 residues: MKILGIETTCDETAAAVVTVGEEERGRILSNEVLSQIAEHAAYGGVVPEIAARAHVEVLDRLIARALQRAGTTLPEIDGIAVAAGPGLIGGVLIGLVTAKTLALVARKPLLAVNHLEAHALTPRLTDGLAFPYLLLLASGGHTQLVAVKGVGDYVRLGTTIDDAIGEAFDKVAKLLGLGYPGGPEVERQAQNGNPERFALPRPMLGRRQADFSLSGLKTALRIEAERLEPLASQDVADLCASFQAAVVDVVVDRVRVALRAFAGVAGHPTALVAAGGVAANGAIRRALAAQAGEVGLSFVAPPLPLCGDNGAMIAWAGLERLRLGLVDDLTVPARARWPFAEAAPAA.

Fe cation-binding residues include His115 and His119. Residues 137 to 141 (LASGG), Asp170, Gly183, and Asn281 each bind substrate. Residue Asp309 coordinates Fe cation.

It belongs to the KAE1 / TsaD family. Fe(2+) serves as cofactor.

Its subcellular location is the cytoplasm. It catalyses the reaction L-threonylcarbamoyladenylate + adenosine(37) in tRNA = N(6)-L-threonylcarbamoyladenosine(37) in tRNA + AMP + H(+). Required for the formation of a threonylcarbamoyl group on adenosine at position 37 (t(6)A37) in tRNAs that read codons beginning with adenine. Is involved in the transfer of the threonylcarbamoyl moiety of threonylcarbamoyl-AMP (TC-AMP) to the N6 group of A37, together with TsaE and TsaB. TsaD likely plays a direct catalytic role in this reaction. The polypeptide is tRNA N6-adenosine threonylcarbamoyltransferase (Methylorubrum populi (strain ATCC BAA-705 / NCIMB 13946 / BJ001) (Methylobacterium populi)).